Here is a 407-residue protein sequence, read N- to C-terminus: 1-deoxy-D-xylulose 5-phosphate reductoisomerase (407 aa).

NADPH-binding residues include Thr-22, Gly-23, Ser-24, Ile-25, Gly-48, Asn-51, and Asn-128. Lys-129 provides a ligand contact to 1-deoxy-D-xylulose 5-phosphate. Glu-130 contacts NADPH. A Mn(2+)-binding site is contributed by Asp-152. 1-deoxy-D-xylulose 5-phosphate contacts are provided by Ser-153, Glu-154, Ser-178, and His-201. Glu-154 contacts Mn(2+). NADPH is bound at residue Gly-207. 1-deoxy-D-xylulose 5-phosphate contacts are provided by Ser-214, Asn-219, Lys-220, and Glu-223. Glu-223 provides a ligand contact to Mn(2+).

The protein belongs to the DXR family. Mg(2+) serves as cofactor. Requires Mn(2+) as cofactor.

The catalysed reaction is 2-C-methyl-D-erythritol 4-phosphate + NADP(+) = 1-deoxy-D-xylulose 5-phosphate + NADPH + H(+). Its pathway is isoprenoid biosynthesis; isopentenyl diphosphate biosynthesis via DXP pathway; isopentenyl diphosphate from 1-deoxy-D-xylulose 5-phosphate: step 1/6. Its function is as follows. Catalyzes the NADPH-dependent rearrangement and reduction of 1-deoxy-D-xylulose-5-phosphate (DXP) to 2-C-methyl-D-erythritol 4-phosphate (MEP). This Mycobacterium avium (strain 104) protein is 1-deoxy-D-xylulose 5-phosphate reductoisomerase.